The sequence spans 153 residues: Superoxide dismutase [Cu-Zn] (153 aa).

Cu cation-binding residues include H45, H47, and H62. C56 and C145 are joined by a disulfide. Positions 62, 70, 79, and 82 each coordinate Zn(2+). H119 is a Cu cation binding site.

Belongs to the Cu-Zn superoxide dismutase family. Homodimer. The cofactor is Cu cation. Zn(2+) is required as a cofactor.

The protein localises to the cytoplasm. It catalyses the reaction 2 superoxide + 2 H(+) = H2O2 + O2. Functionally, destroys radicals which are normally produced within the cells and which are toxic to biological systems. The chain is Superoxide dismutase [Cu-Zn] from Drosophila willistoni (Fruit fly).